The sequence spans 475 residues: MAKLHITTWGCQMNEYDSSKMADLLNSTHGLELTDKPEEADVLLLNTCSIREKAQEKVFSQLGRWKNWKKDKPDLIIGVGGCVASQEGEHIRDRAPFVDIVFGPQTLHRLPEMINKIRGGDRAIVDISFPEIEKFDRLPEPRAEGPTAFVSIMEGCNKYCSFCVVPYTRGEEVSRPVDDVLFEIAQLAEQGVREVNLLGQNVNAYRGETFDGGICTFAELLRLVAAIDGIDRVRYTTSHPIEFTDDIIEVYRDTPELVSFLHLPIQSGADRVLTMMKRNHTALEYKAIIRKLREVRPNIQISSDFIVGFPGETAEDFEQTMKVIEQVNFDMSFSFIYSARPGTPAADLPDDISEEEKKERLARLQQRINHQAMQFSRAMLGTEQRVLVEGPSKKDIMELTGRTENNRIVNFQGTPDMIGKFVDIKITDVYTNSLRGDVVRTEDEMGLRVVESAASVIARTRKEDDLGVGKYVVNL.

In terms of domain architecture, MTTase N-terminal spans 2-119 (AKLHITTWGC…LPEMINKIRG (118 aa)). Residues Cys-11, Cys-48, Cys-82, Cys-156, Cys-160, and Cys-163 each contribute to the [4Fe-4S] cluster site. The region spanning 142–374 (RAEGPTAFVS…QQRINHQAMQ (233 aa)) is the Radical SAM core domain. The TRAM domain maps to 377-440 (RAMLGTEQRV…TNSLRGDVVR (64 aa)).

This sequence belongs to the methylthiotransferase family. MiaB subfamily. As to quaternary structure, monomer. The cofactor is [4Fe-4S] cluster.

It localises to the cytoplasm. It catalyses the reaction N(6)-dimethylallyladenosine(37) in tRNA + (sulfur carrier)-SH + AH2 + 2 S-adenosyl-L-methionine = 2-methylsulfanyl-N(6)-dimethylallyladenosine(37) in tRNA + (sulfur carrier)-H + 5'-deoxyadenosine + L-methionine + A + S-adenosyl-L-homocysteine + 2 H(+). Catalyzes the methylthiolation of N6-(dimethylallyl)adenosine (i(6)A), leading to the formation of 2-methylthio-N6-(dimethylallyl)adenosine (ms(2)i(6)A) at position 37 in tRNAs that read codons beginning with uridine. The chain is tRNA-2-methylthio-N(6)-dimethylallyladenosine synthase from Actinobacillus pleuropneumoniae serotype 5b (strain L20).